A 408-amino-acid polypeptide reads, in one-letter code: Adenylosuccinate synthetase (408 aa).

GTP is bound by residues 12-18 (GDEGKGK) and 40-42 (GHT). Aspartate 13 serves as the catalytic Proton acceptor. Residues aspartate 13 and glycine 40 each coordinate Mg(2+). Residues 13 to 16 (DEGK), 38 to 41 (NAGH), threonine 121, arginine 135, glutamine 213, threonine 228, and arginine 292 contribute to the IMP site. Histidine 41 acts as the Proton donor in catalysis. 288–294 (TTTGRPR) serves as a coordination point for substrate. GTP is bound by residues arginine 294, 320-322 (KLD), and 393-395 (STS).

This sequence belongs to the adenylosuccinate synthetase family. In terms of assembly, homodimer. It depends on Mg(2+) as a cofactor.

The protein localises to the cytoplasm. It catalyses the reaction IMP + L-aspartate + GTP = N(6)-(1,2-dicarboxyethyl)-AMP + GDP + phosphate + 2 H(+). It participates in purine metabolism; AMP biosynthesis via de novo pathway; AMP from IMP: step 1/2. Its function is as follows. Plays an important role in the de novo pathway of purine nucleotide biosynthesis. Catalyzes the first committed step in the biosynthesis of AMP from IMP. The polypeptide is Adenylosuccinate synthetase (Thermus thermophilus (strain ATCC BAA-163 / DSM 7039 / HB27)).